We begin with the raw amino-acid sequence, 173 residues long: Crossover junction endodeoxyribonuclease RuvC (173 aa).

Catalysis depends on residues Asp-8, Glu-67, and Asp-139. Asp-8, Glu-67, and Asp-139 together coordinate Mg(2+).

The protein belongs to the RuvC family. Homodimer which binds Holliday junction (HJ) DNA. The HJ becomes 2-fold symmetrical on binding to RuvC with unstacked arms; it has a different conformation from HJ DNA in complex with RuvA. In the full resolvosome a probable DNA-RuvA(4)-RuvB(12)-RuvC(2) complex forms which resolves the HJ. Requires Mg(2+) as cofactor.

The protein resides in the cytoplasm. The catalysed reaction is Endonucleolytic cleavage at a junction such as a reciprocal single-stranded crossover between two homologous DNA duplexes (Holliday junction).. In terms of biological role, the RuvA-RuvB-RuvC complex processes Holliday junction (HJ) DNA during genetic recombination and DNA repair. Endonuclease that resolves HJ intermediates. Cleaves cruciform DNA by making single-stranded nicks across the HJ at symmetrical positions within the homologous arms, yielding a 5'-phosphate and a 3'-hydroxyl group; requires a central core of homology in the junction. The consensus cleavage sequence is 5'-(A/T)TT(C/G)-3'. Cleavage occurs on the 3'-side of the TT dinucleotide at the point of strand exchange. HJ branch migration catalyzed by RuvA-RuvB allows RuvC to scan DNA until it finds its consensus sequence, where it cleaves and resolves the cruciform DNA. This is Crossover junction endodeoxyribonuclease RuvC from Shewanella pealeana (strain ATCC 700345 / ANG-SQ1).